The sequence spans 400 residues: Elongation factor Tu (400 aa).

A tr-type G domain is found at Lys-10 to Val-208. Residues Gly-19 to Thr-26 form a G1 region. Gly-19 to Thr-26 is a binding site for GTP. Thr-26 serves as a coordination point for Mg(2+). The G2 stretch occupies residues Gly-60 to Asn-64. The segment at Asp-81 to Gly-84 is G3. GTP contacts are provided by residues Asp-81–His-85 and Asn-136–Asp-139. A G4 region spans residues Asn-136 to Asp-139. The interval Ser-174–Leu-176 is G5.

Belongs to the TRAFAC class translation factor GTPase superfamily. Classic translation factor GTPase family. EF-Tu/EF-1A subfamily. Monomer.

The protein localises to the cytoplasm. It catalyses the reaction GTP + H2O = GDP + phosphate + H(+). Functionally, GTP hydrolase that promotes the GTP-dependent binding of aminoacyl-tRNA to the A-site of ribosomes during protein biosynthesis. This chain is Elongation factor Tu, found in Fervidobacterium nodosum (strain ATCC 35602 / DSM 5306 / Rt17-B1).